We begin with the raw amino-acid sequence, 359 residues long: Endosome-associated-trafficking regulator 1 (359 aa).

2 positions are modified to phosphoserine: Ser-18 and Ser-74. The tract at residues 100–125 (LLDEDEDEEDGWNGAYLPSAMEQTHS) is required for interaction with PTPN13. Positions 153–180 (SLPPWTLSDSDSRISPTGSPSADFTAHG) are disordered. Residues 159 to 174 (LSDSDSRISPTGSPSA) show a composition bias toward polar residues. A phosphoserine mark is found at Ser-167 and Ser-171. Residues 185–295 (DRHLRTLQIS…FKRENEALRS (111 aa)) adopt a coiled-coil conformation.

The protein belongs to the ENTR1 family. Found in a complex with ENTR1, PTPN13 and GIT1. Interacts with PTPN13 (via the FERM domain). Interacts (via N-terminus) with GIT1 (via N- and C-terminus); this interaction is direct. Interacts with NOD2. Interacts (via N-terminus) with IFT88. Interacts with VPS35. In terms of processing, phosphorylated.

It localises to the cytoplasm. The protein localises to the early endosome. The protein resides in the endosome. Its subcellular location is the recycling endosome. It is found in the midbody. It localises to the cytoskeleton. The protein localises to the microtubule organizing center. The protein resides in the centrosome. Its subcellular location is the cilium basal body. Endosome-associated protein that plays a role in membrane receptor sorting, cytokinesis and ciliogenesis. Involved in the endosome-to-plasma membrane trafficking and recycling of SNX27-retromer-dependent cargo proteins, such as GLUT1. Involved in the regulation of cytokinesis; the function may involve PTPN13 and GIT1. Plays a role in the formation of cilia. Involved in cargo protein localization, such as PKD2, at primary cilia. Involved in the presentation of the tumor necrosis factor (TNF) receptor TNFRSF1A on the cell surface, and hence in the modulation of the TNF-induced apoptosis. In Bos taurus (Bovine), this protein is Endosome-associated-trafficking regulator 1.